Here is a 419-residue protein sequence, read N- to C-terminus: Dual specificity protein phosphatase 7 (419 aa).

Residues 1–47 (MKNQLRGPPARAHMSTSGAAAAGGTRAGSEPGAGSGSGAGTGAGAAT) are disordered. Over residues 10 to 29 (ARAHMSTSGAAAAGGTRAGS) the composition is skewed to low complexity. Residues 31–47 (PGAGSGSGAGTGAGAAT) show a composition bias toward gly residues. One can recognise a Rhodanese domain in the interval 68-187 (GGASLLLLDC…FQTEYSEHCE (120 aa)). The disordered stretch occupies residues 216-240 (CSDGESDRELPSSATESDGSPVPSS). A compositionally biased stretch (polar residues) spans 227–240 (SSATESDGSPVPSS). The Tyrosine-protein phosphatase domain maps to 244-387 (FPVQILPYLY…LLDFERTLGL (144 aa)). Cys-331 (phosphocysteine intermediate) is an active-site residue. 331-337 (CLAGISR) is a substrate binding site.

Belongs to the protein-tyrosine phosphatase family. Non-receptor class dual specificity subfamily. Interacts with MAPK1/ERK2; the interaction enhances DUSP7 phosphatase activity. In terms of tissue distribution, strongly expressed in liver. Expressed at significantly higher levels in malignant hematopoietic cells than in corresponding non-malignant cells.

It localises to the cytoplasm. It catalyses the reaction O-phospho-L-tyrosyl-[protein] + H2O = L-tyrosyl-[protein] + phosphate. The enzyme catalyses O-phospho-L-seryl-[protein] + H2O = L-seryl-[protein] + phosphate. It carries out the reaction O-phospho-L-threonyl-[protein] + H2O = L-threonyl-[protein] + phosphate. Strongly inhibited by sodium orthovanadate. In terms of biological role, dual specificity protein phosphatase. Shows high activity towards MAPK1/ERK2. Also has lower activity towards MAPK14 and MAPK8. In arrested oocytes, plays a role in meiotic resumption. Promotes nuclear envelope breakdown and activation of the CDK1/Cyclin-B complex in oocytes, probably by dephosphorylating and inactivating the conventional protein kinase C (cPKC) isozyme PRKCB. May also inactivate PRKCA and/or PRKCG. Also important in oocytes for normal chromosome alignment on the metaphase plate and progression to anaphase, where it might regulate activity of the spindle-assembly checkpoint (SAC) complex. The protein is Dual specificity protein phosphatase 7 of Homo sapiens (Human).